Consider the following 126-residue polypeptide: Putative lipoprotein LprD (126 aa).

The first 19 residues, 1–19 (MSTTRRRRPALVALVTIAA), serve as a signal peptide directing secretion. Cys20 is lipidated: N-palmitoyl cysteine. Residue Cys20 is the site of S-diacylglycerol cysteine attachment. Residues 44–64 (GYALQWPLFAGFCLYTYHNFV) form a helical membrane-spanning segment.

It to M.tuberculosis Rv1343c.

It localises to the cell membrane. The chain is Putative lipoprotein LprD (lprD) from Mycobacterium leprae (strain TN).